We begin with the raw amino-acid sequence, 673 residues long: MALKRGLSGVNRIRGSGGGSRSVLVLLIFFCVFAPLCFFVGRGVYIDSSNDYSIVSVKQNLDWRERLAMQSVRSLFSKEILDVIATSTADLGPLSLDSFKKNNLSASWRGTGVDPSFRHSENPATPDVKSNNLNEKRDSISKDSIHQKVETPTKIHRRQLREKRREMRANELVQHNDDTILKLENAAIERSKSVDSAVLGKYSIWRRENENDNSDSNIRLMRDQVIMARVYSGIAKLKNKNDLLQELQARLKDSQRVLGEATSDADLPRSAHEKLRAMGQVLAKAKMQLYDCKLVTGKLRAMLQTADEQVRSLKKQSTFLAQLAAKTIPNPIHCLSMRLTIDYYLLSPEKRKFPRSENLENPNLYHYALFSDNVLAASVVVNSTIMNAKDPSKHVFHLVTDKLNFGAMNMWFLLNPPGKATIHVENVDEFKWLNSSYCPVLRQLESAAMREYYFKADHPTSGSSNLKYRNPKYLSMLNHLRFYLPEVYPKLNKILFLDDDIIVQKDLTPLWEVNLNGKVNGAVETCGESFHRFDKYLNFSNPHIARNFNPNACGWAYGMNMFDLKEWKKRDITGIYHKWQNMNENRTLWKLGTLPPGLITFYGLTHPLNKAWHVLGLGYNPSIDKKDIENAAVVHYNGNMKPWLELAMSKYRPYWTKYIKFDHPYLRRCNLHE.

Over 1–22 (MALKRGLSGVNRIRGSGGGSRS) the chain is Cytoplasmic. The chain crosses the membrane as a helical; Signal-anchor for type II membrane protein span at residues 23-43 (VLVLLIFFCVFAPLCFFVGRG). Residues 44–673 (VYIDSSNDYS…PYLRRCNLHE (630 aa)) lie on the Lumenal side of the membrane. Asparagine 103 carries N-linked (GlcNAc...) asparagine glycosylation. The disordered stretch occupies residues 112-136 (GVDPSFRHSENPATPDVKSNNLNEK). 4 N-linked (GlcNAc...) asparagine glycosylation sites follow: asparagine 382, asparagine 434, asparagine 538, and asparagine 585.

It belongs to the glycosyltransferase 8 family. Expressed in seedlings, inflorescences, flowers, siliques, pollen, roots, stems and leaves.

It localises to the golgi apparatus membrane. It catalyses the reaction [(1-&gt;4)-alpha-D-galacturonosyl](n) + UDP-alpha-D-galacturonate = [(1-&gt;4)-alpha-D-galacturonosyl](n+1) + UDP + H(+). Its pathway is glycan metabolism; pectin biosynthesis. Involved in pectin biosynthesis. Catalyzes the transfer of galacturonic acid from uridine 5'-diphosphogalacturonic acid onto the pectic polysaccharide homogalacturonan. In Arabidopsis thaliana (Mouse-ear cress), this protein is Polygalacturonate 4-alpha-galacturonosyltransferase (GAUT1).